Reading from the N-terminus, the 429-residue chain is MGLYAAAAGVLAGVESRQGSIKGLVYSSNFQNVKQLYALVCETQRYSAVLDAVIASAGLLRAEKKLRPHLAKVLVYELLLGKGFRGGGGRWKALLGRHQARLKAELARLKVHRGVSRNEDLLEVGSRPGPASQLPRFVRVNTLKTCSDDVVDYFKRQGFSYQGRASSLDDLRALKGKHFLLDPLMPELLVFPAQTDLHEHPLYRAGHLILQDRASCLPAMLLDPPPGSHVIDACAAPGNKTSHLAALLKNQGKIFAFDLDAKRLASMATLLARAGVSCCELAEEDFLAVSPSDPRYHEVHYILLDPSCSGSGMPSRQLEEPGAGTPSPVRLHALAGFQQRALCHALTFPSLQRLVYSTCSLCQEENEDVVRDALQQNPGAFRLAPALPAWPHRGLSTFPGAEHCLRASPETTLSSGFFVAVIERVEVPR.

An N-acetylglycine modification is found at G2. S167 carries the post-translational modification Phosphoserine. S-adenosyl-L-methionine-binding positions include 234 to 240 (CAAPGNK), D258, R263, and D305. The active-site Nucleophile is C359.

It belongs to the class I-like SAM-binding methyltransferase superfamily. RsmB/NOP family. Ubiquitous. Detected in placenta, heart and skeletal muscle.

The protein resides in the nucleus. Its subcellular location is the nucleolus. The enzyme catalyses cytidine(3782) in 28S rRNA + S-adenosyl-L-methionine = 5-methylcytidine(3782) in 28S rRNA + S-adenosyl-L-homocysteine + H(+). In terms of biological role, S-adenosyl-L-methionine-dependent methyltransferase that specifically methylates the C(5) position of cytosine 3782 (m5C3782) in 28S rRNA. m5C3782 promotes protein translation without affecting ribosome biogenesis and fidelity. Required for corpus callosum and cerebral cortex development. The sequence is that of 28S rRNA (cytosine-C(5))-methyltransferase from Homo sapiens (Human).